Reading from the N-terminus, the 324-residue chain is Arginase (324 aa).

Residues His-115, Asp-143, His-145, and Asp-147 each coordinate Mn(2+). Substrate is bound by residues 145–149, 156–158, and Asp-202; these read HADIN and SGN. 2 residues coordinate Mn(2+): Asp-249 and Asp-251. Residues Thr-263 and Glu-294 each contribute to the substrate site.

This sequence belongs to the arginase family. In terms of assembly, homotrimer. Mn(2+) serves as cofactor.

It carries out the reaction L-arginine + H2O = urea + L-ornithine. It functions in the pathway nitrogen metabolism; urea cycle; L-ornithine and urea from L-arginine: step 1/1. This is Arginase (agaA) from Emericella nidulans (strain FGSC A4 / ATCC 38163 / CBS 112.46 / NRRL 194 / M139) (Aspergillus nidulans).